Consider the following 69-residue polypeptide: Large ribosomal subunit protein eL38 (69 aa).

It belongs to the eukaryotic ribosomal protein eL38 family.

This is Large ribosomal subunit protein eL38 (RPL38) from Solanum lycopersicum (Tomato).